A 381-amino-acid chain; its full sequence is Ubiquitin-associated protein 1-like (381 aa).

Residues 4–50 (LDGVPFKLPKGFVIGTEPLPGPELSVPACGEVLLGSMHDFSLERTAL) form the UMA domain. Disordered stretches follow at residues 87-141 (LAPA…PGRR) and 185-228 (SLCP…LRSH). Over residues 95–104 (RDPEAGHQER) the composition is skewed to basic and acidic residues. Acidic residues predominate over residues 105 to 123 (PEEEGEDEAEASSGSEEEP). A compositionally biased stretch (low complexity) spans 124–141 (APSSLQPGSPASPGPGRR). Over residues 197–216 (ASPPGPAPQHPAAPASPPRP) the composition is skewed to pro residues.

This is Ubiquitin-associated protein 1-like (UBAP1L) from Homo sapiens (Human).